The chain runs to 468 residues: Ribulose bisphosphate carboxylase large chain (468 aa).

N6,N6,N6-trimethyllysine is present on Lys7. Residues Asn116 and Thr166 each contribute to the substrate site. Lys168 functions as the Proton acceptor in the catalytic mechanism. Lys170 lines the substrate pocket. Lys194, Asp196, and Glu197 together coordinate Mg(2+). Lys194 carries the N6-carboxylysine modification. The Proton acceptor role is filled by His287. Substrate is bound by residues Arg288, His320, and Ser372.

This sequence belongs to the RuBisCO large chain family. Type I subfamily. In terms of assembly, heterohexadecamer of 8 large chains and 8 small chains. The cofactor is Mg(2+).

Its subcellular location is the plastid. It localises to the chloroplast. It catalyses the reaction 2 (2R)-3-phosphoglycerate + 2 H(+) = D-ribulose 1,5-bisphosphate + CO2 + H2O. The catalysed reaction is D-ribulose 1,5-bisphosphate + O2 = 2-phosphoglycolate + (2R)-3-phosphoglycerate + 2 H(+). Its function is as follows. RuBisCO catalyzes two reactions: the carboxylation of D-ribulose 1,5-bisphosphate, the primary event in carbon dioxide fixation, as well as the oxidative fragmentation of the pentose substrate in the photorespiration process. Both reactions occur simultaneously and in competition at the same active site. This is Ribulose bisphosphate carboxylase large chain from Couroupita guianensis (Cannonball tree).